A 365-amino-acid polypeptide reads, in one-letter code: MTENHYLLLTPGPLTTTKTVKEVMLYDWCTWDVEYNTMVQKVRAKLVSLATKEEEKYTTVLMQGSGTFSVEAVIGSVIPKNGKLLVCTNGAYGKRIVQMAEMLHIDVVVSQTEEWEPTNIVEVEKILQQDKEITHIAVVHCETTTGIINPIVDVCKLGKQYGKVTLVDAMSSFGGIEIDIAELQIDFLISSANKCIQGVPGFGFVIAKRDELLKCKGQARSLSLDLYDQWETMENQNGKWRFTSPTHVVHAFYQALLELEKEGGVRARYNRYYNNQKLLVNRMGEIGFKPIVNEKYQSPIITSFIYPEGNFEFQQLYNELKRYGFVIYPGKISKVDTFRIGNIGDVHEEDINRLVDSIAKGVVIG.

An N6-(pyridoxal phosphate)lysine modification is found at Lys-194.

It belongs to the class-V pyridoxal-phosphate-dependent aminotransferase family. PhnW subfamily. In terms of assembly, homodimer. Pyridoxal 5'-phosphate serves as cofactor.

It catalyses the reaction (2-aminoethyl)phosphonate + pyruvate = phosphonoacetaldehyde + L-alanine. In terms of biological role, involved in phosphonate degradation. This is 2-aminoethylphosphonate--pyruvate transaminase from Bacillus cereus (strain ZK / E33L).